The chain runs to 371 residues: Cytochrome b (371 aa).

A run of 4 helical transmembrane segments spans residues 25–45 (FGSM…FLAV), 69–90 (WMMQ…YIHI), 105–125 (WLSG…GYVL), and 170–190 (FFAL…LHIM). Residues His75 and His89 each coordinate heme b. The heme b site is built by His174 and His188. His193 provides a ligand contact to a ubiquinone. 4 helical membrane passes run 218-238 (YKDL…VSFL), 280-300 (LWGA…PFTH), 312-332 (IMQL…WAAT), and 339-358 (FTMI…IMNP).

It belongs to the cytochrome b family. The cytochrome bc1 complex contains 3 respiratory subunits (MT-CYB, CYC1 and UQCRFS1), 2 core proteins (UQCRC1 and UQCRC2) and probably 6 low-molecular weight proteins. Heme b serves as cofactor.

It is found in the mitochondrion inner membrane. Functionally, component of the ubiquinol-cytochrome c reductase complex (complex III or cytochrome b-c1 complex) that is part of the mitochondrial respiratory chain. The b-c1 complex mediates electron transfer from ubiquinol to cytochrome c. Contributes to the generation of a proton gradient across the mitochondrial membrane that is then used for ATP synthesis. The chain is Cytochrome b (MT-CYB) from Eryx miliaris nogaiorum (Black sand boa).